The following is a 383-amino-acid chain: Small ribosomal subunit protein mS31 (383 aa).

The transit peptide at 1–21 directs the protein to the mitochondrion; sequence MLRSLCSIAVRLGGARQPRLL. The stretch at 158-187 forms a coiled coil; that stretch reads VNEAQIKLQEQRKALLNDVREKVEQEEVEE.

The protein belongs to the mitochondrion-specific ribosomal protein mS31 family. In terms of assembly, component of the mitochondrial ribosome small subunit (28S) which comprises a 12S rRNA and about 30 distinct proteins.

It is found in the mitochondrion. This is Small ribosomal subunit protein mS31 (mrps-31) from Caenorhabditis elegans.